Here is a 321-residue protein sequence, read N- to C-terminus: Phospho-N-acetylmuramoyl-pentapeptide-transferase (321 aa).

10 helical membrane passes run 1-21 (MIFVYALLALVITFVLVPVLI), 50-70 (MGGLTFLLSIVITSLVAIIFV), 76-96 (IILLLFVTIGFGLIGFIDDYI), 112-132 (FLAQIGIAIIFFVLSNVFHLV), 140-160 (IPFTNVAIPLSFAYVIFIVFL), 176-196 (GLATGLSIIGFTMYAIMSFVL), 200-220 (AIGIFCIIMLFALLGFLPYNI), 225-245 (VFMGDTGSLALGGIFATISIM), 250-270 (LSLIFIGLVFVIETLSVMLQV), and 300-320 (VVTVFWAVGLISGLIGLWIGV).

Belongs to the glycosyltransferase 4 family. MraY subfamily. It depends on Mg(2+) as a cofactor.

Its subcellular location is the cell membrane. It carries out the reaction UDP-N-acetyl-alpha-D-muramoyl-L-alanyl-gamma-D-glutamyl-L-lysyl-D-alanyl-D-alanine + di-trans,octa-cis-undecaprenyl phosphate = Mur2Ac(oyl-L-Ala-gamma-D-Glu-L-Lys-D-Ala-D-Ala)-di-trans,octa-cis-undecaprenyl diphosphate + UMP. The protein operates within cell wall biogenesis; peptidoglycan biosynthesis. Catalyzes the initial step of the lipid cycle reactions in the biosynthesis of the cell wall peptidoglycan: transfers peptidoglycan precursor phospho-MurNAc-pentapeptide from UDP-MurNAc-pentapeptide onto the lipid carrier undecaprenyl phosphate, yielding undecaprenyl-pyrophosphoryl-MurNAc-pentapeptide, known as lipid I. The sequence is that of Phospho-N-acetylmuramoyl-pentapeptide-transferase from Staphylococcus aureus (strain bovine RF122 / ET3-1).